The sequence spans 504 residues: MAMSLQGSRRASAGSRRRTSPPVSVRDAYGTASLSSSSNSGSCKGSDSSPTPRRSMKYTLCSDNHGIKPPTPEQYLTPLQQKEVCIRHLKARLKDTQDRLQDRDTEIDDLKTQLSRMQEDWIEEECHRVEAQLALKEARKEIRQLKQVIDTVKNNLIDKDKGLQKYFVDINIQNKKLETLLHSMEVAQNGVAKEEGTGESAGGSPARSLTRSSTYTKLSDPAVCGDRQAGDPSNTPAEDRADSGFVAADDTLSRTEALEASSLLSSGVDCGFEEASLHSSFNLGPRFPASNTYEKLLCGMEAAVQASCMQERAIQTDFVQYQPDLNTILEKVGQAQGCSSVLKDRHSELDLHPSGPRDPDSAVVVTVGDEPEAPEPITRGPAIHRPAVNSNPGLPVSVVCPVEEEEEAAAAAAAAAAATTTTTTTEKEPKSYWSRHYIVDLLAVVVPAVPTVAWLCRSQRRQGQPIYNISSLLRGCCTVALHSIRRISCSLSQPSAGSSGGSQL.

Residues 1–74 (MAMSLQGSRR…HGIKPPTPEQ (74 aa)) are disordered. Low complexity-rich tracts occupy residues 7–26 (GSRRASAGSRRRTSPPVSVR) and 33–49 (SLSSSSNSGSCKGSDSS). Positions 79-161 (LQQKEVCIRH…VKNNLIDKDK (83 aa)) form a coiled coil. Residues 191-244 (VAKEEGTGESAGGSPARSLTRSSTYTKLSDPAVCGDRQAGDPSNTPAEDRADSG) form a disordered region. Residues serine 200 and serine 204 each carry the phosphoserine modification. Residues 207 to 217 (RSLTRSSTYTK) are compositionally biased toward polar residues. Threonine 214 carries the phosphothreonine modification. Serine 219 carries the phosphoserine modification. Threonine 235 carries the post-translational modification Phosphothreonine. Residues 437–456 (YIVDLLAVVVPAVPTVAWLC) traverse the membrane as a helical segment.

Binds to STX1A. Interacts with DNM1; this interaction inhibits the binding of DNM1 to AMPH and DNM1-receptor-mediated endocytosis.

The protein resides in the membrane. The protein localises to the synapse. It is found in the synaptosome. Functionally, inhibits SNARE complex formation by absorbing free STX1A. The polypeptide is Syntaphilin (Rattus norvegicus (Rat)).